Reading from the N-terminus, the 471-residue chain is 5-hydroxytryptamine receptor 2A (471 aa).

Residues 1–80 lie on the Extracellular side of the membrane; sequence MEILCEDNIS…LQEKNWSALL (80 aa). Asparagine 8, asparagine 38, asparagine 44, asparagine 51, and asparagine 54 each carry an N-linked (GlcNAc...) asparagine glycan. Residues 81–97 traverse the membrane as a helical segment; the sequence is TTVVIILTIAGNILVIM. At 98-111 the chain is on the cytoplasmic side; the sequence is AVSLEKKLQNATNY. The chain crosses the membrane as a helical span at residues 112–137; that stretch reads FLMSLAIADMLLGFLVMPVSMLTILY. The Extracellular portion of the chain corresponds to 138 to 146; the sequence is GYRWPLPSK. The helical transmembrane segment at 147-171 threads the bilayer; it reads LCAVWIYLDVLFSTASIMHLCAISL. Cysteine 148 and cysteine 227 are disulfide-bonded. Aspartate 155 contacts serotonin. The short motif at 172–174 is the DRY motif; important for ligand-induced conformation changes element; it reads DRY. At 172–191 the chain is on the cytoplasmic side; sequence DRYVAIQNPIHHSRFNSRTK. Residues 192 to 215 traverse the membrane as a helical segment; the sequence is AFLKIIAVWTISVGISMPIPVFGL. Topologically, residues 216–232 are extracellular; the sequence is QDDSKVFKEGSCLLADD. The chain crosses the membrane as a helical span at residues 233–258; the sequence is NFVLIGSFVAFFIPLTIMVITYFLTI. Residues 259–322 are Cytoplasmic-facing; the sequence is KSLQKEATLC…QSISNEQKAC (64 aa). Position 280 is a phosphoserine (serine 280). The chain crosses the membrane as a helical span at residues 323-348; sequence KVLGIVFFLFVVMWCPFFITNIMAVI. Position 343 (asparagine 343) interacts with serotonin. Cysteine 349 and cysteine 353 are oxidised to a cystine. Topologically, residues 349–356 are extracellular; that stretch reads CKESCNEN. The chain crosses the membrane as a helical span at residues 357 to 382; that stretch reads VIGALLNVFVWIGYLSSAVNPLVYTL. Residues 376–380 carry the NPxxY motif; important for ligand-induced conformation changes and signaling motif; that stretch reads NPLVY. At 383-471 the chain is on the cytoplasmic side; sequence FNKTYRSAFS…ETVNEKVSCV (89 aa). A PDZ-binding motif is present at residues 469-471; that stretch reads SCV.

Belongs to the G-protein coupled receptor 1 family. In terms of assembly, interacts (via C-terminus) with MPDZ and PATJ. May interact (via C-terminus) with MPP3, PRDX6, DLG4, DLG1, CASK, APBA1 and MAGI2. Interacts with GRM2 and DRD2; this may affect signaling. Detected in neurons in brain cortex. Detected in adult intestine, especially in mucosal epithelium, longitudinal and circular layers of muscularis externa and myenteric plexuses. Highly expressed in Paneth cells, and detected at lower levels in enterocytes (at protein level). Detected in neurons in the brain cortex.

The protein localises to the cell membrane. It is found in the cell projection. Its subcellular location is the dendrite. The protein resides in the axon. It localises to the cytoplasmic vesicle. The protein localises to the membrane. It is found in the caveola. Its subcellular location is the presynapse. Its activity is regulated as follows. G-protein coupled receptor activity is regulated by lipids: oleamide increases HTR2A-mediated activity. Functionally, G-protein coupled receptor for 5-hydroxytryptamine (serotonin). Also functions as a receptor for various drugs and psychoactive substances, including mescaline, psilocybin, 1-(2,5-dimethoxy-4-iodophenyl)-2-aminopropane (DOI) and lysergic acid diethylamide (LSD). Ligand binding causes a conformation change that triggers signaling via guanine nucleotide-binding proteins (G proteins) and modulates the activity of downstream effectors. HTR2A is coupled to G(q)/G(11) G alpha proteins and activates phospholipase C-beta, releasing diacylglycerol (DAG) and inositol 1,4,5-trisphosphate (IP3) second messengers that modulate the activity of phosphatidylinositol 3-kinase and promote the release of Ca(2+) ions from intracellular stores, respectively. Beta-arrestin family members inhibit signaling via G proteins and mediate activation of alternative signaling pathways. Affects neural activity, perception, cognition and mood. Plays a role in the regulation of behavior, including responses to anxiogenic situations and psychoactive substances. Plays a role in intestinal smooth muscle contraction, and may play a role in arterial vasoconstriction. This Mus musculus (Mouse) protein is 5-hydroxytryptamine receptor 2A (Htr2a).